The primary structure comprises 233 residues: Gamma-glutamyl-hercynylcysteine sulfoxide hydrolase (233 aa).

C2 serves as the catalytic Nucleophile. The 232-residue stretch at 2–233 (CRHLGWLGAQ…TALDRAKGPR (232 aa)) folds into the Glutamine amidotransferase type-2 domain.

The enzyme catalyses gamma-L-glutamyl-hercynylcysteine S-oxide + H2O = S-(hercyn-2-yl)-L-cysteine S-oxide + L-glutamate. The protein operates within amino-acid biosynthesis; ergothioneine biosynthesis. Its function is as follows. Catalyzes the hydrolysis of the gamma-glutamyl amide bond of hercynyl-gamma-L-glutamyl-L-cysteine sulfoxide to produce hercynylcysteine sulfoxide, a step in the biosynthesis pathway of ergothioneine. Ergothioneine is an antioxidant that protects mycobacteria from oxidative stress. This Mycobacterium tuberculosis (strain ATCC 25618 / H37Rv) protein is Gamma-glutamyl-hercynylcysteine sulfoxide hydrolase (egtC).